We begin with the raw amino-acid sequence, 347 residues long: MLISQRPTLSEDVLTDNRSQFVIEPLEPGFGYTLGNSLRRTLLSSIPGAAVTSIRIDGVLHEFTTVPGVKEDVTEIILNLKSLVVSSEEDEPVTMYLRKQGPGEVTAGDIVPPAGVTVHNPGMHIATLNDKGKLEVELVVERGRGYVPAVQNRASGAEIGRIPVDSIYSPVLKVTYKVDATRVEQRTDFDKLILDVETKNSISPRDALASAGKTLVELFGLARELNVEAEGIEIGPSPAEADHIASFALPIDDLDLTVRSYNCLKREGVHTVGELVARTESDLLDIRNFGQKSIDEVKIKLHQLGLSLKDSPPSFDPSEVAGYDVATGTWSTEGAYDEQDYAETEQL.

The tract at residues M1–N226 is alpha N-terminal domain (alpha-NTD). The interval H243 to L347 is alpha C-terminal domain (alpha-CTD).

This sequence belongs to the RNA polymerase alpha chain family. Homodimer. The RNAP catalytic core consists of 2 alpha, 1 beta, 1 beta' and 1 omega subunit. When a sigma factor is associated with the core the holoenzyme is formed, which can initiate transcription.

The enzyme catalyses RNA(n) + a ribonucleoside 5'-triphosphate = RNA(n+1) + diphosphate. DNA-dependent RNA polymerase catalyzes the transcription of DNA into RNA using the four ribonucleoside triphosphates as substrates. This chain is DNA-directed RNA polymerase subunit alpha, found in Mycobacterium bovis (strain ATCC BAA-935 / AF2122/97).